A 31-amino-acid chain; its full sequence is Cyclotide glopa C (31 aa).

The cyclopeptide (Gly-Asn) cross-link spans 1–31 (GDLPICGETCFEGGNCRIPGCTCVWPFCSKN). 3 cysteine pairs are disulfide-bonded: Cys-6/Cys-21, Cys-10/Cys-23, and Cys-16/Cys-28.

Post-translationally, this is a cyclic peptide.

Its function is as follows. Probably participates in a plant defense mechanism. This Gloeospermum pauciflorum protein is Cyclotide glopa C.